A 218-amino-acid polypeptide reads, in one-letter code: Glutathione S-transferase A (218 aa).

Ser-1 is subject to N-acetylserine. In terms of domain architecture, GST N-terminal spans 2–82 (GKPVLHYFNV…YIATKYNLYG (81 aa)). Lys-3 is subject to N6-succinyllysine. Residues Tyr-8, Lys-44, 53–54 (QV), and 66–67 (QS) each bind glutathione. Residues 84–206 (DTKERLLIDM…LQPGSQRKPF (123 aa)) enclose the GST C-terminal domain.

This sequence belongs to the GST superfamily. Alpha family. As to quaternary structure, homodimer or heterodimer of GSTA1 and GSTA2.

The protein resides in the cytoplasm. The enzyme catalyses RX + glutathione = an S-substituted glutathione + a halide anion + H(+). It catalyses the reaction prostaglandin A2 + glutathione = prostaglandin A2-S-(R)-glutathione. The catalysed reaction is prostaglandin J2 + glutathione = prostaglandin J2-S-(R)-glutathione. It carries out the reaction (13S)-hydroperoxy-(9Z,11E)-octadecadienoate + 2 glutathione = (13S)-hydroxy-(9Z,11E)-octadecadienoate + glutathione disulfide + H2O. The enzyme catalyses androst-5-ene-3,17-dione = androst-4-ene-3,17-dione. Its function is as follows. Glutathione S-transferase that catalyzes the nucleophilic attack of the sulfur atom of glutathione on the electrophilic groups of a wide range of exogenous and endogenous compounds. Involved in the formation of glutathione conjugates of both prostaglandin A2 (PGA2) and prostaglandin J2 (PGJ2). It also catalyzes the isomerization of D5-androstene-3,17-dione (AD) into D4-androstene-3,17-dione and may therefore play an important role in hormone biosynthesis. Through its glutathione-dependent peroxidase activity toward the fatty acid hydroperoxide (13S)-hydroperoxy-(9Z,11E)-octadecadienoate/13-HPODE it is also involved in the metabolism of oxidized linoleic acid. In Cavia porcellus (Guinea pig), this protein is Glutathione S-transferase A.